The chain runs to 140 residues: UPF0336 protein TW736 (140 aa).

The protein belongs to the UPF0336 family.

The protein is UPF0336 protein TW736 of Tropheryma whipplei (strain TW08/27) (Whipple's bacillus).